The sequence spans 269 residues: Flagellar brake protein YcgR (269 aa).

Residues methionine 1–tyrosine 42 are disordered. The span at alanine 19–threonine 33 shows a compositional bias: acidic residues. One can recognise a PilZ domain in the interval glutamine 149–phenylalanine 261.

Belongs to the YcgR family. Monomer. Interacts with the flagellar basal bodies.

It is found in the bacterial flagellum basal body. Acts as a flagellar brake, regulating swimming and swarming in a bis-(3'-5') cyclic diguanylic acid (c-di-GMP)-dependent manner. Binds 1 c-di-GMP dimer per subunit. Increasing levels of c-di-GMP lead to decreased motility. The protein is Flagellar brake protein YcgR of Cupriavidus taiwanensis (strain DSM 17343 / BCRC 17206 / CCUG 44338 / CIP 107171 / LMG 19424 / R1) (Ralstonia taiwanensis (strain LMG 19424)).